The sequence spans 434 residues: Trigger factor (434 aa).

Residues 161–246 (GDRVVIDFAG…VKGVEAPILP (86 aa)) enclose the PPIase FKBP-type domain.

Belongs to the FKBP-type PPIase family. Tig subfamily.

It is found in the cytoplasm. The enzyme catalyses [protein]-peptidylproline (omega=180) = [protein]-peptidylproline (omega=0). Involved in protein export. Acts as a chaperone by maintaining the newly synthesized protein in an open conformation. Functions as a peptidyl-prolyl cis-trans isomerase. The polypeptide is Trigger factor (Aromatoleum aromaticum (strain DSM 19018 / LMG 30748 / EbN1) (Azoarcus sp. (strain EbN1))).